We begin with the raw amino-acid sequence, 526 residues long: Outer capsid protein VP5 (526 aa).

The interval 1 to 42 is involved in membrane permeabilization; it reads MGKIIKSLSRFGKKVGNALTSNTAKKIYSTIGKAAERFAESE.

This sequence belongs to the orbivirus VP5 family.

It localises to the virion. Functionally, VP5 protein is one of the two proteins (with VP2) which constitute the virus particle outer capsid. Acts as a membrane permeabilization protein that mediates release of viral particles from endosomal compartments into the cytoplasm. Permeabilization activity is probably negatively regulated by VP2 and is triggered by endosomal degradation of VP2 and exposure to low pH. In Antilocapra americana (Pronghorn), this protein is Outer capsid protein VP5 (Segment-6).